The primary structure comprises 117 residues: Large ribosomal subunit protein uL18 (117 aa).

It belongs to the universal ribosomal protein uL18 family. Part of the 50S ribosomal subunit; part of the 5S rRNA/L5/L18/L25 subcomplex. Contacts the 5S and 23S rRNAs.

This is one of the proteins that bind and probably mediate the attachment of the 5S RNA into the large ribosomal subunit, where it forms part of the central protuberance. The chain is Large ribosomal subunit protein uL18 from Blochmanniella floridana.